The sequence spans 147 residues: Transcriptional repressor NrdR (147 aa).

Residues 3–34 (CLFCRSDDTKVIDSRTSEDGISIRRRRECQLC) fold into a zinc finger. In terms of domain architecture, ATP-cone spans 46-136 (LTVIKRNGTS…VYQDFDSLED (91 aa)).

Belongs to the NrdR family. Zn(2+) is required as a cofactor.

Its function is as follows. Negatively regulates transcription of bacterial ribonucleotide reductase nrd genes and operons by binding to NrdR-boxes. The protein is Transcriptional repressor NrdR of Tropheryma whipplei (strain TW08/27) (Whipple's bacillus).